A 122-amino-acid polypeptide reads, in one-letter code: NADH-ubiquinone oxidoreductase chain 3 (122 aa).

The next 3 membrane-spanning stretches (helical) occupy residues 12 to 32, 66 to 86, and 91 to 111; these read VLIF…LSYV, LVAI…PWAV, and VTIF…VGFI.

The protein belongs to the complex I subunit 3 family.

It localises to the mitochondrion membrane. It carries out the reaction a ubiquinone + NADH + 5 H(+)(in) = a ubiquinol + NAD(+) + 4 H(+)(out). Functionally, core subunit of the mitochondrial membrane respiratory chain NADH dehydrogenase (Complex I) that is believed to belong to the minimal assembly required for catalysis. Complex I functions in the transfer of electrons from NADH to the respiratory chain. The immediate electron acceptor for the enzyme is believed to be ubiquinone. The chain is NADH-ubiquinone oxidoreductase chain 3 (NAD3) from Reclinomonas americana.